We begin with the raw amino-acid sequence, 232 residues long: MGILKSLFTLGKSFISQAEESIEETQGVRMLEQHIRDAKAELDKAGKSRVDLLARVKLSHDKLKDLRERKASLEARALEALSKNVNPSLINEVAEEIARLENLITAEEQVLSNLEVSRDGVEKAVTATAQRIAQFEQQMEVVKATEAMQRAQQAVTTSTVGASSSVSTAAESLKRLQTRQAERQARLDAAAQLEKVADGRDLDEKLAEAGIGGSNKSSAQDVLARLQRQQGE.

The signal sequence occupies residues Met-1–Ala-18. The tract at residues Ala-207–Glu-232 is disordered.

Belongs to the PspA/Vipp/IM30 family.

This is an uncharacterized protein from Escherichia coli O6:H1 (strain CFT073 / ATCC 700928 / UPEC).